The primary structure comprises 149 residues: Arginine repressor (149 aa).

The protein belongs to the ArgR family.

The protein resides in the cytoplasm. It functions in the pathway amino-acid biosynthesis; L-arginine biosynthesis [regulation]. Regulates arginine biosynthesis genes. The protein is Arginine repressor of Listeria monocytogenes serotype 4b (strain F2365).